A 153-amino-acid chain; its full sequence is MKTFSLKPADVEKKWVIIDAEGLVVGRLASIVAMRLRGKHKPQYTPHVDCGDNVIVINADKVKFTGRKYDQKVYYHHTGFPGGIKERSAKYILEGRFPERVVEKAVERMLPRGPLFRRILGNLRVYKGSEHPHAAQQPETLDVAALNRKNVSA.

It belongs to the universal ribosomal protein uL13 family. As to quaternary structure, part of the 50S ribosomal subunit.

Its function is as follows. This protein is one of the early assembly proteins of the 50S ribosomal subunit, although it is not seen to bind rRNA by itself. It is important during the early stages of 50S assembly. In Methylobacterium sp. (strain 4-46), this protein is Large ribosomal subunit protein uL13.